A 163-amino-acid polypeptide reads, in one-letter code: Acetolactate synthase isozyme 3 small subunit (163 aa).

The region spanning Ile-4 to Gln-78 is the ACT domain.

It belongs to the acetolactate synthase small subunit family. As to quaternary structure, dimer of large and small chains.

It catalyses the reaction 2 pyruvate + H(+) = (2S)-2-acetolactate + CO2. It functions in the pathway amino-acid biosynthesis; L-isoleucine biosynthesis; L-isoleucine from 2-oxobutanoate: step 1/4. The protein operates within amino-acid biosynthesis; L-valine biosynthesis; L-valine from pyruvate: step 1/4. Sensitive to valine inhibition. This is Acetolactate synthase isozyme 3 small subunit (ilvH) from Escherichia coli (strain K12).